Consider the following 130-residue polypeptide: Protein ApaG (130 aa).

In terms of domain architecture, ApaG spans 3-127 (RALTKDIEVV…FSLDSPGLLR (125 aa)).

This chain is Protein ApaG, found in Rhizobium leguminosarum bv. trifolii (strain WSM2304).